We begin with the raw amino-acid sequence, 493 residues long: Cytochrome P450 2W1 (493 aa).

A signal peptide spans 1 to 23; that stretch reads MALLLLGVWGILLLLGLWGLLQG. A glycan (N-linked (GlcNAc...) asparagine) is linked at Asn-180. Cys-436 contributes to the heme binding site.

Belongs to the cytochrome P450 family. Heme is required as a cofactor. As to expression, detected in colon, ileum, and testes.

The protein resides in the endoplasmic reticulum lumen. The protein localises to the cell membrane. Its subcellular location is the microsome membrane. It catalyses the reaction all-trans-retinoate + reduced [NADPH--hemoprotein reductase] + O2 = all-trans-4-hydroxyretinoate + oxidized [NADPH--hemoprotein reductase] + H2O + H(+). The catalysed reaction is 1-(9Z-octadecenoyl)-sn-glycero-3-phosphocholine + reduced [NADPH--hemoprotein reductase] + O2 = 1-[8-hydroxy-(9Z)-octadecenoyl]-sn-glycero-3-phosphocholine + oxidized [NADPH--hemoprotein reductase] + H2O + H(+). The enzyme catalyses 1-(9Z-octadecenoyl)-sn-glycero-3-phosphocholine + reduced [NADPH--hemoprotein reductase] + O2 = 1-[11-hydroxy-(9Z)-octadecenoyl]-sn-glycero-3-phosphocholine + oxidized [NADPH--hemoprotein reductase] + H2O + H(+). It carries out the reaction 1-(9Z-octadecenoyl)-sn-glycero-3-phosphocholine + reduced [NADPH--hemoprotein reductase] + O2 = 1-[(9S,10R)-epoxy-octadecanoyl]-sn-glycero-3-phosphocholine + oxidized [NADPH--hemoprotein reductase] + H2O + H(+). It catalyses the reaction 1-(9Z-octadecenoyl)-sn-glycero-3-phosphocholine + reduced [NADPH--hemoprotein reductase] + O2 = 1-[(9R,10S)-epoxy-octadecanoyl]-sn-glycero-3-phosphocholine + oxidized [NADPH--hemoprotein reductase] + H2O + H(+). Functionally, a cytochrome P450 monooxygenase that may play a role in retinoid and phospholipid metabolism. Catalyzes the hydroxylation of saturated carbon hydrogen bonds. Hydroxylates all trans-retinoic acid (atRA) to 4-hydroxyretinoate and may regulate atRA clearance. Other retinoids such as all-trans retinol and all-trans retinal are potential endogenous substrates. Catalyzes both epoxidation of double bonds and hydroxylation of carbon hydrogen bonds of the fatty acyl chain of 1-acylphospholipids/2-lysophospholipids. Can metabolize various lysophospholipids classes including lysophosphatidylcholines (LPCs), lysophosphatidylinositols (LPIs), lysophosphatidylserines (LPSs), lysophosphatidylglycerols (LPGs), lysophosphatidylethanolamines (LPEs) and lysophosphatidic acids (LPAs). Has low or no activity toward 2-acylphospholipids/1-lysophospholipids, diacylphospholipids and free fatty acids. May play a role in tumorigenesis by activating procarcinogens such as aflatoxin B1, polycyclic aromatic hydrocarbon dihydrodiols and aromatic amines. Mechanistically, uses molecular oxygen inserting one oxygen atom into a substrate, and reducing the second into a water molecule, with two electrons provided by NADPH via cytochrome P450 reductase (CPR; NADPH-ferrihemoprotein reductase). In Mus musculus (Mouse), this protein is Cytochrome P450 2W1 (Cyp2w1).